The primary structure comprises 380 residues: Cytochrome b (380 aa).

4 helical membrane passes run 34-54 (FGSL…LLAM), 78-99 (WLIR…YLHI), 114-134 (WNTG…GYVL), and 179-199 (FFAL…IHLT). Residues H84 and H98 each coordinate heme b. 2 residues coordinate heme b: H183 and H197. Residue H202 coordinates a ubiquinone. 4 helical membrane-spanning segments follow: residues 227-247 (LKDI…ALFS), 289-309 (LGGV…PFLH), 321-341 (ISQL…WVGS), and 348-368 (FIII…ILFP).

It belongs to the cytochrome b family. As to quaternary structure, the cytochrome bc1 complex contains 11 subunits: 3 respiratory subunits (MT-CYB, CYC1 and UQCRFS1), 2 core proteins (UQCRC1 and UQCRC2) and 6 low-molecular weight proteins (UQCRH/QCR6, UQCRB/QCR7, UQCRQ/QCR8, UQCR10/QCR9, UQCR11/QCR10 and a cleavage product of UQCRFS1). This cytochrome bc1 complex then forms a dimer. Heme b serves as cofactor.

The protein localises to the mitochondrion inner membrane. Component of the ubiquinol-cytochrome c reductase complex (complex III or cytochrome b-c1 complex) that is part of the mitochondrial respiratory chain. The b-c1 complex mediates electron transfer from ubiquinol to cytochrome c. Contributes to the generation of a proton gradient across the mitochondrial membrane that is then used for ATP synthesis. The chain is Cytochrome b (MT-CYB) from Pelecanoides garnotii (Peruvian diving petrel).